The primary structure comprises 361 residues: Chorismate synthase (361 aa).

Residue R47 coordinates NADP(+). FMN contacts are provided by residues 124–126, G286, 301–305, and R327; these read RAS and KPTAT.

This sequence belongs to the chorismate synthase family. As to quaternary structure, homotetramer. FMNH2 is required as a cofactor.

It carries out the reaction 5-O-(1-carboxyvinyl)-3-phosphoshikimate = chorismate + phosphate. The protein operates within metabolic intermediate biosynthesis; chorismate biosynthesis; chorismate from D-erythrose 4-phosphate and phosphoenolpyruvate: step 7/7. Its function is as follows. Catalyzes the anti-1,4-elimination of the C-3 phosphate and the C-6 proR hydrogen from 5-enolpyruvylshikimate-3-phosphate (EPSP) to yield chorismate, which is the branch point compound that serves as the starting substrate for the three terminal pathways of aromatic amino acid biosynthesis. This reaction introduces a second double bond into the aromatic ring system. In Prochlorococcus marinus (strain NATL1A), this protein is Chorismate synthase.